The following is a 178-amino-acid chain: CDP-archaeol synthase (178 aa).

5 consecutive transmembrane segments (helical) span residues 3-23, 55-75, 91-111, 125-145, and 149-169; these read IIYL…ANAT, TFFG…IFNL, GIVG…GSFI, ILDQ…FAPV, and MGIF…IIAY.

The protein belongs to the CDP-archaeol synthase family. Mg(2+) is required as a cofactor.

The protein localises to the cell membrane. The catalysed reaction is 2,3-bis-O-(geranylgeranyl)-sn-glycerol 1-phosphate + CTP + H(+) = CDP-2,3-bis-O-(geranylgeranyl)-sn-glycerol + diphosphate. The protein operates within membrane lipid metabolism; glycerophospholipid metabolism. Functionally, catalyzes the formation of CDP-2,3-bis-(O-geranylgeranyl)-sn-glycerol (CDP-archaeol) from 2,3-bis-(O-geranylgeranyl)-sn-glycerol 1-phosphate (DGGGP) and CTP. This reaction is the third ether-bond-formation step in the biosynthesis of archaeal membrane lipids. The sequence is that of CDP-archaeol synthase from Methanococcus aeolicus (strain ATCC BAA-1280 / DSM 17508 / OCM 812 / Nankai-3).